The following is a 350-amino-acid chain: Protein-glutamate methylesterase/protein-glutamine glutaminase (350 aa).

The region spanning 5–122 (RVLSVDDSAL…REGMLAYSEM (118 aa)) is the Response regulatory domain. Asp-56 carries the 4-aspartylphosphate modification. A CheB-type methylesterase domain is found at 152–338 (LLSSEKLLVI…DLSQVVSQQM (187 aa)). Residues Ser-164, His-190, and Asp-286 contribute to the active site.

This sequence belongs to the CheB family. In terms of processing, phosphorylated by CheA. Phosphorylation of the N-terminal regulatory domain activates the methylesterase activity.

It is found in the cytoplasm. The catalysed reaction is [protein]-L-glutamate 5-O-methyl ester + H2O = L-glutamyl-[protein] + methanol + H(+). The enzyme catalyses L-glutaminyl-[protein] + H2O = L-glutamyl-[protein] + NH4(+). Functionally, involved in chemotaxis. Part of a chemotaxis signal transduction system that modulates chemotaxis in response to various stimuli. Catalyzes the demethylation of specific methylglutamate residues introduced into the chemoreceptors (methyl-accepting chemotaxis proteins or MCP) by CheR. Also mediates the irreversible deamidation of specific glutamine residues to glutamic acid. This chain is Protein-glutamate methylesterase/protein-glutamine glutaminase, found in Enterobacter cloacae.